We begin with the raw amino-acid sequence, 311 residues long: Meteorin-like protein (311 aa).

A compositionally biased stretch (low complexity) spans 1–13; it reads MRGAARAAWGRAG. A disordered region spans residues 1-24; that stretch reads MRGAARAAWGRAGQPWPRPPAPGP. Positions 1–45 are cleaved as a signal peptide; sequence MRGAARAAWGRAGQPWPRPPAPGPPPPPLPLLLLLLAGLLGGAGA. 5 cysteine pairs are disulfide-bonded: C52–C75, C107–C143, C188–C260, C191–C284, and C201–C306.

This sequence belongs to the meteorin family. In terms of tissue distribution, highly expressed in the skeletal muscle, in subcutaneous adipose tissue, epididymal white adipose tissue depots and heart. Also expressed in brown adipose tissues and kidney.

Its subcellular location is the secreted. In terms of biological role, hormone induced following exercise or cold exposure that promotes energy expenditure. Induced either in the skeletal muscle after exercise or in adipose tissue following cold exposure and is present in the circulation. Able to stimulate energy expenditure associated with the browning of the white fat depots and improves glucose tolerance. Does not promote an increase in a thermogenic gene program via direct action on adipocytes, but acts by stimulating several immune cell subtypes to enter the adipose tissue and activate their prothermogenic actions. Stimulates an eosinophil-dependent increase in IL4 expression and promotes alternative activation of adipose tissue macrophages, which are required for the increased expression of the thermogenic and anti-inflammatory gene programs in fat. Required for some cold-induced thermogenic responses, suggesting a role in metabolic adaptations to cold temperatures. This Homo sapiens (Human) protein is Meteorin-like protein (METRNL).